A 582-amino-acid chain; its full sequence is Aspartate--tRNA(Asp/Asn) ligase (582 aa).

Residue E177 participates in L-aspartate binding. The tract at residues 201-204 is aspartate; that stretch reads QLFK. R223 contacts L-aspartate. ATP contacts are provided by residues 223 to 225 and Q232; that span reads RDE. H447 is a binding site for L-aspartate. E481 lines the ATP pocket. R488 is a binding site for L-aspartate. 533–536 is a binding site for ATP; sequence GLDR.

It belongs to the class-II aminoacyl-tRNA synthetase family. Type 1 subfamily. In terms of assembly, homodimer.

The protein resides in the cytoplasm. It carries out the reaction tRNA(Asx) + L-aspartate + ATP = L-aspartyl-tRNA(Asx) + AMP + diphosphate. Aspartyl-tRNA synthetase with relaxed tRNA specificity since it is able to aspartylate not only its cognate tRNA(Asp) but also tRNA(Asn). Reaction proceeds in two steps: L-aspartate is first activated by ATP to form Asp-AMP and then transferred to the acceptor end of tRNA(Asp/Asn). This is Aspartate--tRNA(Asp/Asn) ligase from Chlamydia muridarum (strain MoPn / Nigg).